Reading from the N-terminus, the 472-residue chain is Eukaryotic translation initiation factor 2 subunit 3, Y-linked (472 aa).

Alanine 2 is modified (N-acetylalanine). Serine 16 bears the Phosphoserine mark. The region spanning 39–247 (QATINIGTIG…YIVKKIPVPL (209 aa)) is the tr-type G domain. Residues 48 to 55 (GHVAHGKS) form a G1 region. 51–56 (AHGKST) is a GTP binding site. Residues 76-80 (NITIK) are G2. The G3 stretch occupies residues 134 to 137 (DCPG). GTP-binding positions include 190–193 (NKID) and 225–227 (SAQ). The segment at 190–193 (NKID) is G4. A G5 region spans residues 225-227 (SAQ).

Belongs to the TRAFAC class translation factor GTPase superfamily. Classic translation factor GTPase family. EIF2G subfamily. In terms of assembly, eIF2 is a heterotrimer composed of an alpha (EIF2S1), a beta (EIF2S2) and a gamma (Eif2s3x and Eif2s3y) chain. eIF2 is member of the 43S pre-initiation complex (43S PIC). As to expression, widely expressed in males.

The enzyme catalyses GTP + H2O = GDP + phosphate + H(+). In terms of biological role, member of the eIF2 complex that functions in the early steps of protein synthesis by forming a ternary complex with GTP and initiator tRNA. This complex binds to a 40S ribosomal subunit, followed by mRNA binding to form the 43S pre-initiation complex (43S PIC). Junction of the 60S ribosomal subunit to form the 80S initiation complex is preceded by hydrolysis of the GTP bound to eIF2 and release of an eIF2-GDP binary complex. In order for eIF2 to recycle and catalyze another round of initiation, the GDP bound to eIF2 must exchange with GTP by way of a reaction catalyzed by eIF-2B. Along with its paralog on chromosome X, may contribute to spermatogenesis up to the round spermatid stage. The chain is Eukaryotic translation initiation factor 2 subunit 3, Y-linked (Eif2s3y) from Rattus norvegicus (Rat).